A 394-amino-acid polypeptide reads, in one-letter code: Na(+)/H(+) antiporter NhaA (394 aa).

11 helical membrane passes run 24–44 (AGLV…SPLA), 58–78 (LSVQ…LVGL), 96–116 (TLPG…YVML), 126–146 (GWAI…SLLG), 155–175 (IFLA…IAIF), 180–200 (INVA…SLCA), 214–234 (AVLW…GVLL), 267–287 (VAFA…FASI), 300–320 (VAAG…ALMV), 336–356 (VLGV…IGLL), and 370–390 (GILA…RIAG).

Belongs to the NhaA Na(+)/H(+) (TC 2.A.33) antiporter family.

The protein resides in the cell inner membrane. It carries out the reaction Na(+)(in) + 2 H(+)(out) = Na(+)(out) + 2 H(+)(in). Functionally, na(+)/H(+) antiporter that extrudes sodium in exchange for external protons. This Azorhizobium caulinodans (strain ATCC 43989 / DSM 5975 / JCM 20966 / LMG 6465 / NBRC 14845 / NCIMB 13405 / ORS 571) protein is Na(+)/H(+) antiporter NhaA.